Here is a 221-residue protein sequence, read N- to C-terminus: Serine/arginine-rich splicing factor 2 (221 aa).

Ser2 is modified (N-acetylserine). Ser2 is subject to Phosphoserine. Residues 14 to 92 (TSLKVDNLTY…RELRVQMARY (79 aa)) form the RRM domain. Phosphothreonine occurs at positions 22 and 25. Ser26 bears the Phosphoserine mark. An N6-acetyllysine modification is found at Lys52. The interval 92-221 (YGRPPDSHHS…SPEEEGAVSS (130 aa)) is disordered. Basic residues-rich tracts occupy residues 117–171 (RRSR…RSKS) and 179–189 (SRSRSRSRSRS). Phosphoserine is present on residues Ser189, Ser191, Ser204, Ser206, Ser208, Ser212, and Ser220.

This sequence belongs to the splicing factor SR family. As to quaternary structure, in vitro, self-associates and binds SRSF1/SFRS1 (ASF/SF2), SNRNP70 and U2AF1 but not U2AF2. Binds SREK1/SFRS12. Interacts with CCNL1 and CCNL2. Interacts with SCAF11. Interacts with ZRSR2/U2AF1-RS2. Interacts with CCDC55 (via C-terminus). Interacts with BRDT. In terms of processing, extensively phosphorylated on serine residues in the RS domain. Phosphorylated by SRPK2 and this causes its redistribution from the nuclear speckle to nucleoplasm and controls cell fate decision in response to cisplatin treatment. KAT5/TIP60 inhibits its phosphorylation by preventing SRPK2 nuclear translocation. Post-translationally, acetylation on Lys-52 by KAT5/TIP60 promotes its proteasomal degradation. This effect is counterbalanced by HDAC6, which positively controls SRSF2 protein level by deacetylating it and preventing its proteasomal degradation.

It is found in the nucleus. The protein localises to the nucleoplasm. It localises to the nucleus speckle. In terms of biological role, necessary for the splicing of pre-mRNA. It is required for formation of the earliest ATP-dependent splicing complex and interacts with spliceosomal components bound to both the 5'- and 3'-splice sites during spliceosome assembly. It also is required for ATP-dependent interactions of both U1 and U2 snRNPs with pre-mRNA. Interacts with other spliceosomal components, via the RS domains, to form a bridge between the 5'- and 3'-splice site binding components, U1 snRNP and U2AF. Binds to purine-rich RNA sequences, either 5'-AGSAGAGTA-3' (S=C or G) or 5'-GTTCGAGTA-3'. Can bind to beta-globin mRNA and commit it to the splicing pathway. The phosphorylated form (by SRPK2) is required for cellular apoptosis in response to cisplatin treatment. The chain is Serine/arginine-rich splicing factor 2 (SRSF2) from Sus scrofa (Pig).